Here is a 457-residue protein sequence, read N- to C-terminus: Serine--tRNA ligase (457 aa).

252 to 254 provides a ligand contact to L-serine; sequence TAE. Residues 283-285 and Val-299 contribute to the ATP site; that span reads RKE. An L-serine-binding site is contributed by Glu-306. 370 to 373 contributes to the ATP binding site; the sequence is EMVS. Thr-406 contacts L-serine.

The protein belongs to the class-II aminoacyl-tRNA synthetase family. Type-1 seryl-tRNA synthetase subfamily. In terms of assembly, homodimer. The tRNA molecule binds across the dimer.

It is found in the cytoplasm. It carries out the reaction tRNA(Ser) + L-serine + ATP = L-seryl-tRNA(Ser) + AMP + diphosphate + H(+). The catalysed reaction is tRNA(Sec) + L-serine + ATP = L-seryl-tRNA(Sec) + AMP + diphosphate + H(+). Its pathway is aminoacyl-tRNA biosynthesis; selenocysteinyl-tRNA(Sec) biosynthesis; L-seryl-tRNA(Sec) from L-serine and tRNA(Sec): step 1/1. In terms of biological role, catalyzes the attachment of serine to tRNA(Ser). Is also able to aminoacylate tRNA(Sec) with serine, to form the misacylated tRNA L-seryl-tRNA(Sec), which will be further converted into selenocysteinyl-tRNA(Sec). This chain is Serine--tRNA ligase, found in Saccharolobus islandicus (strain M.14.25 / Kamchatka #1) (Sulfolobus islandicus).